A 449-amino-acid chain; its full sequence is MAQVYSQEVYVQYLKRYGFVFQSSELYNGLANSWDFGPLGAVLKQQIKTALYNFFIKNKRDVLLIDTPIILNEQIWKASGHLANFTDALVDCKSCKLRFRVDHLDEQIKSATQWNPKQVNCPNCKANNWSEVRDFNLLFQTEIGVVNSEKRLVYLRPETAQGIFINFKQLLQLKKRPLPFGVAQFGKSFRNEVTPGNFLFRVREFEQFEMEWFCNPQASLSVFESQQQAIAHFLFKVLQLNPALVKQYEYDKNELAHYANKTVDFLFQFPHGLRELWGLADRGTFDLEQHQKYAKKPLDFFDGENNEHFIPAVVEPSVGIERLFYALIVSSYQQEQLEGEMREVLRLPFHLCPEQIVVLPLVNKLKETAQTLFEALSQTHWRIGFESAGSIGKRYRKADAIGTKFAITFDFESLEDQAVTIRERDSLKQVRVPIKELKAWFAQHDDQSH.

2 residues coordinate substrate: Arg100 and Glu158. ATP contacts are provided by residues 190–192 (RNE), 200–205 (FRVREF), 275–276 (EL), and 319–322 (GIER). 205 to 209 (FEQFE) is a binding site for substrate. 315–319 (EPSVG) serves as a coordination point for substrate.

Belongs to the class-II aminoacyl-tRNA synthetase family. As to quaternary structure, homodimer.

The protein localises to the cytoplasm. It carries out the reaction tRNA(Gly) + glycine + ATP = glycyl-tRNA(Gly) + AMP + diphosphate. Its function is as follows. Catalyzes the attachment of glycine to tRNA(Gly). This Mycoplasma pneumoniae (strain ATCC 29342 / M129 / Subtype 1) (Mycoplasmoides pneumoniae) protein is Glycine--tRNA ligase.